Consider the following 275-residue polypeptide: Glycerol-3-phosphate dehydrogenase [NAD(P)+] (275 aa).

NADPH is bound by residues tryptophan 12, arginine 32, and lysine 105. The sn-glycerol 3-phosphate site is built by lysine 105, glycine 133, and threonine 135. Position 137 (alanine 137) interacts with NADPH. Sn-glycerol 3-phosphate is bound by residues lysine 188, aspartate 241, serine 251, arginine 252, and asparagine 253. The active-site Proton acceptor is the lysine 188. Arginine 252 contacts NADPH.

It belongs to the NAD-dependent glycerol-3-phosphate dehydrogenase family.

The protein resides in the cytoplasm. It catalyses the reaction sn-glycerol 3-phosphate + NAD(+) = dihydroxyacetone phosphate + NADH + H(+). The catalysed reaction is sn-glycerol 3-phosphate + NADP(+) = dihydroxyacetone phosphate + NADPH + H(+). It functions in the pathway membrane lipid metabolism; glycerophospholipid metabolism. In terms of biological role, catalyzes the reduction of the glycolytic intermediate dihydroxyacetone phosphate (DHAP) to sn-glycerol 3-phosphate (G3P), the key precursor for phospholipid synthesis. The sequence is that of Glycerol-3-phosphate dehydrogenase [NAD(P)+] from Paramagnetospirillum magneticum (strain ATCC 700264 / AMB-1) (Magnetospirillum magneticum).